A 347-amino-acid polypeptide reads, in one-letter code: Quinolinate synthase (347 aa).

Residues H47 and S68 each contribute to the iminosuccinate site. C113 contributes to the [4Fe-4S] cluster binding site. Residues 139–141 and S156 each bind iminosuccinate; that span reads YAN. Position 200 (C200) interacts with [4Fe-4S] cluster. Residues 226–228 and T243 each bind iminosuccinate; that span reads HPE. Residue C297 coordinates [4Fe-4S] cluster.

The protein belongs to the quinolinate synthase family. Type 1 subfamily. It depends on [4Fe-4S] cluster as a cofactor.

The protein localises to the cytoplasm. It carries out the reaction iminosuccinate + dihydroxyacetone phosphate = quinolinate + phosphate + 2 H2O + H(+). Its pathway is cofactor biosynthesis; NAD(+) biosynthesis; quinolinate from iminoaspartate: step 1/1. Its function is as follows. Catalyzes the condensation of iminoaspartate with dihydroxyacetone phosphate to form quinolinate. In Escherichia fergusonii (strain ATCC 35469 / DSM 13698 / CCUG 18766 / IAM 14443 / JCM 21226 / LMG 7866 / NBRC 102419 / NCTC 12128 / CDC 0568-73), this protein is Quinolinate synthase.